We begin with the raw amino-acid sequence, 63 residues long: MKAKELREKSVEELNTELLNLLREQFNLRMQAASGQLQQSHLLKQVRRDVARVKTLLTEKAGA.

Belongs to the universal ribosomal protein uL29 family.

The chain is Large ribosomal subunit protein uL29 from Salmonella agona (strain SL483).